The sequence spans 174 residues: Co-chaperone protein HscB homolog (174 aa).

The 73-residue stretch at 2–74 (NYFELFKFPP…IRRAEHMLSL (73 aa)) folds into the J domain.

This sequence belongs to the HscB family. Interacts with HscA and stimulates its ATPase activity.

Its function is as follows. Co-chaperone involved in the maturation of iron-sulfur cluster-containing proteins. Seems to help targeting proteins to be folded toward HscA. The polypeptide is Co-chaperone protein HscB homolog (Shewanella baltica (strain OS195)).